The sequence spans 691 residues: ATP-dependent zinc metalloprotease FtsH 2 (691 aa).

The interval 1 to 48 is disordered; the sequence is MTDEPQSDEQQTTEQERPLGTKRATRADGLRRPGVRSGLAERRSPAAD. The Cytoplasmic segment spans residues 1–64; sequence MTDEPQSDEQ…AAVRRFLLRD (64 aa). Basic and acidic residues predominate over residues 14–31; the sequence is EQERPLGTKRATRADGLR. Residues 65–85 form a helical membrane-spanning segment; sequence VFALGLMIAALVIVILFFTLL. Over 86–168 the chain is Extracellular; that stretch reads GATKPTSSGT…AVKQQPGKAQ (83 aa). The helical transmembrane segment at 169–189 threads the bilayer; that stretch reads VTIVVQFLLPILLLVCLFALF. Residues 190-691 are Cytoplasmic-facing; that stretch reads MRIGQDGGAG…ERGSARDRDA (502 aa). Residue 265-272 participates in ATP binding; that stretch reads GPPGTGKT. Histidine 486 lines the Zn(2+) pocket. Glutamate 487 is an active-site residue. Zn(2+)-binding residues include histidine 490 and aspartate 563.

The protein in the central section; belongs to the AAA ATPase family. It in the C-terminal section; belongs to the peptidase M41 family. As to quaternary structure, homohexamer. The cofactor is Zn(2+).

It is found in the cell membrane. Its function is as follows. Acts as a processive, ATP-dependent zinc metallopeptidase for both cytoplasmic and membrane proteins. Plays a role in the quality control of integral membrane proteins. The chain is ATP-dependent zinc metalloprotease FtsH 2 from Conexibacter woesei (strain DSM 14684 / CCUG 47730 / CIP 108061 / JCM 11494 / NBRC 100937 / ID131577).